The primary structure comprises 242 residues: Sugar fermentation stimulation protein homolog (242 aa).

Belongs to the SfsA family.

This is Sugar fermentation stimulation protein homolog from Methanosphaera stadtmanae (strain ATCC 43021 / DSM 3091 / JCM 11832 / MCB-3).